The chain runs to 243 residues: Type III pantothenate kinase (243 aa).

7–14 contacts ATP; that stretch reads DLGNSRFK. Residues Y91 and 98–101 contribute to the substrate site; that span reads GVDR. D100 functions as the Proton acceptor in the catalytic mechanism. T122 is a binding site for ATP. T172 contributes to the substrate binding site.

The protein belongs to the type III pantothenate kinase family. As to quaternary structure, homodimer. NH4(+) is required as a cofactor. The cofactor is K(+).

The protein localises to the cytoplasm. The catalysed reaction is (R)-pantothenate + ATP = (R)-4'-phosphopantothenate + ADP + H(+). Its pathway is cofactor biosynthesis; coenzyme A biosynthesis; CoA from (R)-pantothenate: step 1/5. Its function is as follows. Catalyzes the phosphorylation of pantothenate (Pan), the first step in CoA biosynthesis. In Stenotrophomonas maltophilia (strain R551-3), this protein is Type III pantothenate kinase.